Consider the following 1260-residue polypeptide: Paraclostridial mosquitocidal protein 1 (1260 aa).

His-208 lines the Zn(2+) pocket. Glu-209 acts as the Proton acceptor in catalysis. Residues His-212 and Glu-248 each coordinate Zn(2+). Residues Cys-395 and Cys-406 are joined by a disulfide bond. Residues 401–824 (NRVNICIDVN…NIQSIPDFDI (424 aa)) are translocation domain (TD). Positions 825 to 1065 (NALIDRLGIQ…SYFNSNILRD (241 aa)) are HCN. An HCC region spans residues 1066–1260 (FWGEPLEYNK…FVSEDEGWKE (195 aa)).

It belongs to the peptidase M27 family. The cofactor is Zn(2+).

It carries out the reaction Limited hydrolysis of proteins of the neuroexocytosis apparatus, synaptobrevins, SNAP25 or syntaxin. No detected action on small molecule substrates.. Preincubation with the metalloprotease inhibitor 1,10-phenanthroline before injection into Anopheles or Aedes decreases toxicity. In terms of biological role, neurotoxin active against Anopheles but not Aedes mosquitoes upon oral ingestion; expression of the ptox operon (ntnh-orfX1-orfX2-orfX3-pmp1) in B.thuringiensis kills Anopheles but not Aedes mosquito 3rd instar larvae. The ntnh-pmp1 construct is about half as toxic. PMP1 is toxic when injected directly into Anopheles or Aedes mosquito 3rd instar larvae, larvae no longer move, suggesting they are paralyzed. Adult mosquitoes (Anopheles or Aedes) and Drosophila lose the ability to fly in a dose-dependent manner by 24 hours after injection with 100 pg neurotoxin. Not toxic upon injection in mice. Neurotoxin that cleaves A.gambiae syntaxin 1a, probably hydrolyzing the '240-Glu-|-His-241' bond. Does not cleave A.gambiae n-synaptobrevin or SNAP-25, nor human syntaxin 1A. Its function is as follows. Responsible for host epithelial cell transcytosis, host nerve cell targeting and translocation of PMP1 light chain (LC) into host cytosol. Composed of 3 subdomains; the translocation domain (TD), and N-terminus and C-terminus of the receptor-binding domain (RBD), called HCN and HCC. This Paraclostridium bifermentans (Clostridium bifermentans) protein is Paraclostridial mosquitocidal protein 1.